Here is a 455-residue protein sequence, read N- to C-terminus: Bifunctional protein GlmU (455 aa).

The interval 1–227 is pyrophosphorylase; that stretch reads MDSLSIVILA…SWEAAGVNNK (227 aa). UDP-N-acetyl-alpha-D-glucosamine contacts are provided by residues 9–12, Lys-23, Gln-74, 79–80, 101–103, Gly-137, Glu-152, Asn-167, and Asn-225; these read LAAG, GT, and YGD. Asp-103 provides a ligand contact to Mg(2+). A Mg(2+)-binding site is contributed by Asn-225. Residues 228 to 248 are linker; the sequence is VQLAELERILQANQARALLEA. The tract at residues 249–455 is N-acetyltransferase; the sequence is GVTLADPARI…GWKRPQKKSG (207 aa). Positions 331 and 349 each coordinate UDP-N-acetyl-alpha-D-glucosamine. Catalysis depends on His-361, which acts as the Proton acceptor. The UDP-N-acetyl-alpha-D-glucosamine site is built by Tyr-364 and Asn-375. Residues Ala-378, 384 to 385, Ser-403, Ala-421, and Arg-438 each bind acetyl-CoA; that span reads NY.

In the N-terminal section; belongs to the N-acetylglucosamine-1-phosphate uridyltransferase family. The protein in the C-terminal section; belongs to the transferase hexapeptide repeat family. In terms of assembly, homotrimer. Mg(2+) is required as a cofactor.

Its subcellular location is the cytoplasm. The catalysed reaction is alpha-D-glucosamine 1-phosphate + acetyl-CoA = N-acetyl-alpha-D-glucosamine 1-phosphate + CoA + H(+). It catalyses the reaction N-acetyl-alpha-D-glucosamine 1-phosphate + UTP + H(+) = UDP-N-acetyl-alpha-D-glucosamine + diphosphate. It functions in the pathway nucleotide-sugar biosynthesis; UDP-N-acetyl-alpha-D-glucosamine biosynthesis; N-acetyl-alpha-D-glucosamine 1-phosphate from alpha-D-glucosamine 6-phosphate (route II): step 2/2. The protein operates within nucleotide-sugar biosynthesis; UDP-N-acetyl-alpha-D-glucosamine biosynthesis; UDP-N-acetyl-alpha-D-glucosamine from N-acetyl-alpha-D-glucosamine 1-phosphate: step 1/1. It participates in bacterial outer membrane biogenesis; LPS lipid A biosynthesis. In terms of biological role, catalyzes the last two sequential reactions in the de novo biosynthetic pathway for UDP-N-acetylglucosamine (UDP-GlcNAc). The C-terminal domain catalyzes the transfer of acetyl group from acetyl coenzyme A to glucosamine-1-phosphate (GlcN-1-P) to produce N-acetylglucosamine-1-phosphate (GlcNAc-1-P), which is converted into UDP-GlcNAc by the transfer of uridine 5-monophosphate (from uridine 5-triphosphate), a reaction catalyzed by the N-terminal domain. This Chromobacterium violaceum (strain ATCC 12472 / DSM 30191 / JCM 1249 / CCUG 213 / NBRC 12614 / NCIMB 9131 / NCTC 9757 / MK) protein is Bifunctional protein GlmU.